The following is a 223-amino-acid chain: Glutathione S-transferase U6 (223 aa).

The 80-residue stretch at 5–84 (EEVKLLGIWA…YIDETWKHNP (80 aa)) folds into the GST N-terminal domain. Residues 15 to 16 (SP), 41 to 42 (NK), 55 to 56 (KI), and 68 to 69 (ES) each bind glutathione. A GST C-terminal domain is found at 89–216 (DPFQRSKARV…EKHIEHMNNM (128 aa)). Thr150 bears the Phosphothreonine mark.

Belongs to the GST superfamily. Tau family.

Its subcellular location is the cytoplasm. The protein localises to the cytosol. The catalysed reaction is RX + glutathione = an S-substituted glutathione + a halide anion + H(+). In terms of biological role, may be involved in the conjugation of reduced glutathione to a wide number of exogenous and endogenous hydrophobic electrophiles and have a detoxification role against certain herbicides. This chain is Glutathione S-transferase U6 (GSTU6), found in Arabidopsis thaliana (Mouse-ear cress).